The primary structure comprises 121 residues: Small ribosomal subunit protein uS13 (121 aa).

The disordered stretch occupies residues 94–121 (GLPVRGQNTKNNSRTRKGPRRTVANKKK). A compositionally biased stretch (basic residues) spans 106–121 (SRTRKGPRRTVANKKK).

The protein belongs to the universal ribosomal protein uS13 family. Part of the 30S ribosomal subunit. Forms a loose heterodimer with protein S19. Forms two bridges to the 50S subunit in the 70S ribosome.

Its function is as follows. Located at the top of the head of the 30S subunit, it contacts several helices of the 16S rRNA. In the 70S ribosome it contacts the 23S rRNA (bridge B1a) and protein L5 of the 50S subunit (bridge B1b), connecting the 2 subunits; these bridges are implicated in subunit movement. Contacts the tRNAs in the A and P-sites. This chain is Small ribosomal subunit protein uS13, found in Halalkalibacterium halodurans (strain ATCC BAA-125 / DSM 18197 / FERM 7344 / JCM 9153 / C-125) (Bacillus halodurans).